The primary structure comprises 336 residues: Flagellar filament 41 kDa core protein (336 aa).

Residues 208–236 are disordered; the sequence is AAPVQEGVQQEGAQQPAPATAPSQGGVNS. Residues 210 to 233 show a composition bias toward low complexity; that stretch reads PVQEGVQQEGAQQPAPATAPSQGG.

This sequence belongs to the bacterial flagellin family. In terms of assembly, the flagellum consists of an outer layer composed of repeating units of FlaA around a core that contains several antigenically related polypeptides.

It localises to the periplasmic flagellum. The protein resides in the periplasm. Functionally, component of the core of the flagella. This is Flagellar filament 41 kDa core protein (fla) from Borreliella burgdorferi (strain ATCC 35210 / DSM 4680 / CIP 102532 / B31) (Borrelia burgdorferi).